A 195-amino-acid chain; its full sequence is Cysteine/O-acetylserine efflux protein (195 aa).

The Periplasmic portion of the chain corresponds to 1–7 (MTPTLLS). The helical transmembrane segment at 8 to 28 (AFWTYTLITAMTPGPNNILAL) threads the bilayer. The Cytoplasmic portion of the chain corresponds to 29–46 (SSATSHGFRQSTRVLAGM). Residues 47-67 (SLGFLIVMLLCAGISFSLAVI) form a helical membrane-spanning segment. The Periplasmic portion of the chain corresponds to 68 to 69 (DP). A helical membrane pass occupies residues 70–90 (AAVHLLSWAGAAYIVWLAWKI). The Cytoplasmic portion of the chain corresponds to 91–104 (ATSPTKEDGLQAKP). A helical transmembrane segment spans residues 105–125 (ISFWASFALQFVNVKIILYGV). The Periplasmic segment spans residues 126–141 (TALSTFVLPQTQALSW). A helical transmembrane segment spans residues 142 to 162 (VVGVSVLLAMIGTFGNVCWAL). At 163-176 (AGHLFQRLFRQYGR) the chain is on the cytoplasmic side. The chain crosses the membrane as a helical span at residues 177–194 (QLNIVLALLLVYCAVRIF). Tyrosine 195 is a topological domain (periplasmic).

The protein belongs to the Rht family.

It is found in the cell inner membrane. It carries out the reaction O-acetyl-L-serine(in) = O-acetyl-L-serine(out). The enzyme catalyses L-cysteine(in) = L-cysteine(out). In terms of biological role, exporter of O-acetylserine (OAS) and cysteine. The sequence is that of Cysteine/O-acetylserine efflux protein (eamB) from Escherichia coli O9:H4 (strain HS).